A 520-amino-acid polypeptide reads, in one-letter code: Protein U4 (520 aa).

The protein belongs to the herpesviridae U4 family.

The polypeptide is Protein U4 (Elephantid herpesvirus 1 (isolate Asian elephant/Berlin/Kiba/1998) (EIHV-1)).